The sequence spans 65 residues: Large ribosomal subunit protein bL35 (65 aa).

The segment at 1-29 (MPKMKTHSGAKKRFKLTGSGKVKRQQANR) is disordered.

Belongs to the bacterial ribosomal protein bL35 family.

The polypeptide is Large ribosomal subunit protein bL35 (Kocuria rhizophila (strain ATCC 9341 / DSM 348 / NBRC 103217 / DC2201)).